Here is a 748-residue protein sequence, read N- to C-terminus: Choline O-acetyltransferase (748 aa).

The span at Met1–Gly10 shows a compositional bias: basic residues. Residues Met1–Ala89 are disordered. Over residues Trp17–Arg32 the composition is skewed to basic and acidic residues. The span at Gly40–Gly53 shows a compositional bias: gly residues. 2 stretches are compositionally biased toward low complexity: residues Asn54–Thr65 and His73–Ala89. Ser125 is modified (phosphoserine). His442 serves as the catalytic Proton acceptor. Phosphoserine is present on Ser473. Residues Gly520–Asp532, Ser558, and Gln659 each bind CoA. Residues Pro727 to Pro748 form a disordered region.

The protein belongs to the carnitine/choline acetyltransferase family.

The catalysed reaction is choline + acetyl-CoA = acetylcholine + CoA. Catalyzes the reversible synthesis of acetylcholine (ACh) from acetyl CoA and choline at cholinergic synapses. This is Choline O-acetyltransferase (CHAT) from Homo sapiens (Human).